A 131-amino-acid chain; its full sequence is Holo-[acyl-carrier-protein] synthase (131 aa).

2 residues coordinate Mg(2+): Asp8 and Glu63.

It belongs to the P-Pant transferase superfamily. AcpS family. It depends on Mg(2+) as a cofactor.

It localises to the cytoplasm. It carries out the reaction apo-[ACP] + CoA = holo-[ACP] + adenosine 3',5'-bisphosphate + H(+). Its function is as follows. Transfers the 4'-phosphopantetheine moiety from coenzyme A to a Ser of acyl-carrier-protein. This chain is Holo-[acyl-carrier-protein] synthase, found in Shewanella halifaxensis (strain HAW-EB4).